The sequence spans 162 residues: Cytochrome c-type biogenesis protein CcmE (162 aa).

Residues 1–8 (MNPRRKKR) are Cytoplasmic-facing. The chain crosses the membrane as a helical; Signal-anchor for type II membrane protein span at residues 9-29 (LALVVGLIGGVAAVASLLLYA). Over 30 to 162 (LNTNLNLFYT…YTETQKGGSR (133 aa)) the chain is Periplasmic. Positions 131 and 135 each coordinate heme.

This sequence belongs to the CcmE/CycJ family.

The protein localises to the cell inner membrane. Functionally, heme chaperone required for the biogenesis of c-type cytochromes. Transiently binds heme delivered by CcmC and transfers the heme to apo-cytochromes in a process facilitated by CcmF and CcmH. This chain is Cytochrome c-type biogenesis protein CcmE, found in Shewanella amazonensis (strain ATCC BAA-1098 / SB2B).